A 1053-amino-acid polypeptide reads, in one-letter code: Ubiquitin-like modifier-activating enzyme 6 (1053 aa).

N-acetylmethionine is present on methionine 1. Arginine 46 lines the ATP pocket. Threonine 54 carries the post-translational modification Phosphothreonine. Positions 470 and 497 each coordinate ATP. Positions 499 and 502 each coordinate Mg(2+). ATP is bound by residues asparagine 505, arginine 508, glutamine 509, and lysine 521. Lysine 544 is modified (N6-acetyllysine). Valine 545 provides a ligand contact to ATP. Residue aspartate 569 participates in Mg(2+) binding. Asparagine 570 is a binding site for ATP. The Glycyl thioester intermediate role is filled by cysteine 625. N6-acetyllysine is present on lysine 729. Serine 737 bears the Phosphoserine mark.

The protein belongs to the ubiquitin-activating E1 family. Forms a thioester with UBD in cells stimulated with tumor necrosis factor-alpha (TNFa) and interferon-gamma (IFNg).

It carries out the reaction ATP + ubiquitin + [E1 ubiquitin-activating enzyme]-L-cysteine = AMP + diphosphate + S-ubiquitinyl-[E1 ubiquitin-activating enzyme]-L-cysteine.. It participates in protein modification; protein ubiquitination. Activates ubiquitin by first adenylating its C-terminal glycine residue with ATP, and thereafter linking this residue to the side chain of a cysteine residue in E1, yielding a ubiquitin-E1 thioester and free AMP. Specific for ubiquitin, does not activate ubiquitin-like peptides. Also activates UBD/FAT10 conjugation via adenylation of its C-terminal glycine. Differs from UBE1 in its specificity for substrate E2 charging. Does not charge cell cycle E2s, such as CDC34. Essential for embryonic development. The chain is Ubiquitin-like modifier-activating enzyme 6 (Uba6) from Mus musculus (Mouse).